Consider the following 95-residue polypeptide: Cytochrome b (95 aa).

Transmembrane regions (helical) follow at residues 1 to 16 (GLCLASQLLTGLFLAM), 40 to 61 (WLIRNMHANGASFFFICIYLHI), and 76 to 95 (WNIGVVLLLLVMMTAFVGYV). Heme b contacts are provided by H46 and H60.

This sequence belongs to the cytochrome b family. The cytochrome bc1 complex contains 3 respiratory subunits (MT-CYB, CYC1 and UQCRFS1), 2 core proteins (UQCRC1 and UQCRC2) and probably 6 low-molecular weight proteins. It depends on heme b as a cofactor.

The protein resides in the mitochondrion inner membrane. Functionally, component of the ubiquinol-cytochrome c reductase complex (complex III or cytochrome b-c1 complex) that is part of the mitochondrial respiratory chain. The b-c1 complex mediates electron transfer from ubiquinol to cytochrome c. Contributes to the generation of a proton gradient across the mitochondrial membrane that is then used for ATP synthesis. This is Cytochrome b (mt-cyb) from Gomphosus varius (Bird wrasse).